The primary structure comprises 111 residues: UPF0122 protein CKR_1296 (111 aa).

It belongs to the UPF0122 family.

Might take part in the signal recognition particle (SRP) pathway. This is inferred from the conservation of its genetic proximity to ftsY/ffh. May be a regulatory protein. The polypeptide is UPF0122 protein CKR_1296 (Clostridium kluyveri (strain NBRC 12016)).